A 361-amino-acid chain; its full sequence is Phospho-N-acetylmuramoyl-pentapeptide-transferase (361 aa).

10 helical membrane passes run 25–45 (RGIL…PAVI), 73–93 (TMGG…WGDL), 98–118 (VWLV…DDWI), 139–159 (IFGL…AAIT), 168–188 (IALP…IVGF), 200–220 (GLAI…AYAS), 237–257 (AGEL…FLWF), 264–284 (VFMG…IAVI), 290–310 (VLVI…IQVV), and 339–359 (VIVR…ATLK).

The protein belongs to the glycosyltransferase 4 family. MraY subfamily. Mg(2+) is required as a cofactor.

Its subcellular location is the cell inner membrane. The catalysed reaction is UDP-N-acetyl-alpha-D-muramoyl-L-alanyl-gamma-D-glutamyl-meso-2,6-diaminopimeloyl-D-alanyl-D-alanine + di-trans,octa-cis-undecaprenyl phosphate = di-trans,octa-cis-undecaprenyl diphospho-N-acetyl-alpha-D-muramoyl-L-alanyl-D-glutamyl-meso-2,6-diaminopimeloyl-D-alanyl-D-alanine + UMP. Its pathway is cell wall biogenesis; peptidoglycan biosynthesis. Catalyzes the initial step of the lipid cycle reactions in the biosynthesis of the cell wall peptidoglycan: transfers peptidoglycan precursor phospho-MurNAc-pentapeptide from UDP-MurNAc-pentapeptide onto the lipid carrier undecaprenyl phosphate, yielding undecaprenyl-pyrophosphoryl-MurNAc-pentapeptide, known as lipid I. The chain is Phospho-N-acetylmuramoyl-pentapeptide-transferase from Xanthomonas euvesicatoria pv. vesicatoria (strain 85-10) (Xanthomonas campestris pv. vesicatoria).